A 523-amino-acid polypeptide reads, in one-letter code: MMLRGNLKQVRIEKNPARLRALESAVGESEPAAAAAMALALAGEPAPPAPAPPEDHPDEEMGFTIDIKSFLKPGEKTYTQRCRLFVGNLPTDITEEDFKRLFERYGEPSEVFINRDRGFGFIRLESRTLAEIAKAELDGTILKSRPLRIRFATHGAALTVKNLSPVVSNELLEQAFSQFGPVEKAVVVVDDRGRATGKGFVEFAAKPPARKALERCGDGAFLLTTTPRPVIVEPMEQFDDEDGLPEKLMQKTQQYHKEREQPPRFAQPGTFEFEYASRWKALDEMEKQQREQVDRNIREAKEKLEAEMEAARHEHQLMLMRQDLMRRQEELRRLEELRNQELQKRKQIQLRHEEEHRRREEEMIRHREQEELRRQQEGFKPNYMENREQEMRMGDMGPRGAINMGDAFSPAPAGNQGPPPMMGMNMNNRATIPGPPMGPGPAMGPEGAANMGTPMMPDNGAVHNDRFPQGPPSQMGSPMGSRTGSETPQAPMSGVGPVSGGPGGFGRGSQGGNFEGPNKRRRY.

Met1 is modified (N-acetylmethionine). 2 RRM domains span residues 82–154 (CRLF…FATH) and 156–237 (AALT…PMEQ). Residues 125-358 (ESRTLAEIAK…QLRHEEEHRR (234 aa)) form a sufficient for paraspeckles localization region. The sufficient for perinucleolar caps localization and interaction with NONO stretch occupies residues 231–358 (IVEPMEQFDD…QLRHEEEHRR (128 aa)). Residues 283–377 (DEMEKQQREQ…EQEELRRQQE (95 aa)) are a coiled coil. Phosphoserine is present on residues Ser409, Ser473, and Ser477. The disordered stretch occupies residues 460–523 (GAVHNDRFPQ…FEGPNKRRRY (64 aa)). Polar residues predominate over residues 472 to 490 (PSQMGSPMGSRTGSETPQA). A compositionally biased stretch (gly residues) spans 497-514 (PVSGGPGGFGRGSQGGNF). The residue at position 507 (Arg507) is an Omega-N-methylarginine. Ser509 bears the Phosphoserine mark.

It belongs to the PSPC family. As to quaternary structure, forms heterodimers with NONO; this involves formation of a coiled coil domain by helices from both proteins. Found in a RNP complex with CAT2 transcribed nuclear RNA (CTN-RNA). Interaction with NONO is required for its targeting to paraspeckles and perinucleolar caps. Interacts with SFPQ. Part of the HDP-RNP complex composed of at least HEXIM1, PRKDC, XRCC5, XRCC6, paraspeckle proteins (SFPQ, NONO, PSPC1, RBM14, and MATR3) and NEAT1 RNA. Interacts with ALKBH5 (when acetylated); interaction with acetylated ALKBH5 facilitates recognition of N(6)-methyladenosine (m6A) RNAs. Expressed in pancreas, kidney, skeletal muscle, liver, lung, placenta, brain and heart.

Its subcellular location is the nucleus speckle. It localises to the nucleus. The protein localises to the nucleolus. It is found in the nucleus matrix. The protein resides in the cytoplasm. Functionally, RNA-binding protein required for the formation of nuclear paraspeckles. Binds to poly(A), poly(G) and poly(U) RNA homopolymers. Regulates, cooperatively with NONO and SFPQ, androgen receptor-mediated gene transcription activity in Sertoli cell line. Regulates the circadian clock by repressing the transcriptional activator activity of the CLOCK-BMAL1 heterodimer. Plays a role in the regulation of DNA virus-mediated innate immune response by assembling into the HDP-RNP complex, a complex that serves as a platform for IRF3 phosphorylation and subsequent innate immune response activation through the cGAS-STING pathway. The protein is Paraspeckle component 1 (PSPC1) of Homo sapiens (Human).